Here is a 367-residue protein sequence, read N- to C-terminus: Peptide chain release factor 2 (367 aa).

Position 254 is an N5-methylglutamine (Q254).

This sequence belongs to the prokaryotic/mitochondrial release factor family. Post-translationally, methylated by PrmC. Methylation increases the termination efficiency of RF2.

It localises to the cytoplasm. Functionally, peptide chain release factor 2 directs the termination of translation in response to the peptide chain termination codons UGA and UAA. The polypeptide is Peptide chain release factor 2 (Janthinobacterium sp. (strain Marseille) (Minibacterium massiliensis)).